The sequence spans 519 residues: Protein twist (519 aa).

4 disordered regions span residues 53-77 (MQQQQQQQQHQQQQQQHQQQQQQQY), 131-156 (NFEQQQQQQQQQQQQQTATPAGVATA), 301-321 (YEAYDPANSLNGSTYSSSDRD), and 368-389 (FRKPRRRLKRKPSKTEETDEFS). 2 stretches are compositionally biased toward low complexity: residues 54 to 76 (QQQQQQQQHQQQQQQHQQQQQQQ) and 134 to 146 (QQQQQQQQQQQQQ). A compositionally biased stretch (polar residues) spans 308-317 (NSLNGSTYSS). Residues 368–379 (FRKPRRRLKRKP) show a composition bias toward basic residues. The bHLH domain occupies 390–441 (NQRVMANVRERQRTQSLNDAFKALQQIIPTLPSDKLSKIQTLKLATRYIDFL).

Efficient DNA binding requires dimerization with another bHLH protein. Homodimer.

It localises to the nucleus. Its function is as follows. Involved in the establishment and dorsoventral patterning of germ layers in the embryo. This Drosophila virilis (Fruit fly) protein is Protein twist.